The chain runs to 172 residues: Scytalone dehydratase-like protein Arp1 (172 aa).

Position 49 (Y49) interacts with substrate. Catalysis depends on residues H84 and H109. Residue N130 participates in substrate binding.

The protein belongs to the scytalone dehydratase family. In terms of assembly, homotrimer. Each subunit contains an active site, located in the central part of the hydrophobic core of the monomer, which functions independently.

In terms of biological role, scytalone dehydratase-like protein; part of the Pks2 gene cluster that mediates the formation of infectious structures (appressoria), enabling these fungi to kill insects faster. The product of the Pks2 gene cluster is different from the one of Pks1 and has still not been identified. The polypeptide is Scytalone dehydratase-like protein Arp1 (Metarhizium robertsii (strain ARSEF 23 / ATCC MYA-3075) (Metarhizium anisopliae (strain ARSEF 23))).